The primary structure comprises 345 residues: Eukaryotic translation initiation factor 3 subunit F (345 aa).

The region spanning 30–166 is the MPN domain; sequence VVIQPQAIFS…TRAYISAPVG (137 aa). The tract at residues 308-345 is disordered; the sequence is GGESGGAESGAQRGQRGGKGGRGGQQRNQERGAEEARA. Positions 322–331 are enriched in gly residues; it reads QRGGKGGRGG. Residues 335-345 show a composition bias toward basic and acidic residues; the sequence is NQERGAEEARA.

This sequence belongs to the eIF-3 subunit F family. In terms of assembly, component of the eukaryotic translation initiation factor 3 (eIF-3) complex.

Its subcellular location is the cytoplasm. Its function is as follows. Component of the eukaryotic translation initiation factor 3 (eIF-3) complex, which is involved in protein synthesis of a specialized repertoire of mRNAs and, together with other initiation factors, stimulates binding of mRNA and methionyl-tRNAi to the 40S ribosome. The eIF-3 complex specifically targets and initiates translation of a subset of mRNAs involved in cell proliferation. The chain is Eukaryotic translation initiation factor 3 subunit F from Aspergillus clavatus (strain ATCC 1007 / CBS 513.65 / DSM 816 / NCTC 3887 / NRRL 1 / QM 1276 / 107).